Reading from the N-terminus, the 284-residue chain is Protein G1-like9 (284 aa).

The tract at residues 1-69 (MEPSPDAPRA…PAAAGLSRYE (69 aa)) is disordered. Composition is skewed to low complexity over residues 13–32 (AEEQPGPSSSASAPAPAASS) and 40–63 (QSQAQQQVQEAQPQPLAQQAPAAA). Residues 67–194 (RYESQKRRDW…ARGIPYEKKR (128 aa)) form the ALOG domain. The Nuclear localization signal signature appears at 192–196 (KKRKR). Residues 209–284 (VAPPPVVTAP…SAAKGSATSS (76 aa)) form a disordered region. Residues 246 to 284 (TTPAASPTTPPATSVGTTTAAATAAAAKGSAAKGSATSS) show a composition bias toward low complexity.

This sequence belongs to the plant homeotic and developmental regulators ALOG protein family.

It is found in the nucleus. Probable transcription regulator that acts as a developmental regulator by promoting cell growth in response to light. The polypeptide is Protein G1-like9 (Oryza sativa subsp. indica (Rice)).